A 274-amino-acid polypeptide reads, in one-letter code: Orotidine 5'-phosphate decarboxylase (274 aa).

Lys95 serves as the catalytic Proton donor.

This sequence belongs to the OMP decarboxylase family. Type 2 subfamily.

The catalysed reaction is orotidine 5'-phosphate + H(+) = UMP + CO2. It functions in the pathway pyrimidine metabolism; UMP biosynthesis via de novo pathway; UMP from orotate: step 2/2. This chain is Orotidine 5'-phosphate decarboxylase (pyrF), found in Mycobacterium bovis (strain ATCC BAA-935 / AF2122/97).